We begin with the raw amino-acid sequence, 496 residues long: Cytochrome P450 71B1 (496 aa).

C436 is a heme binding site.

This sequence belongs to the cytochrome P450 family. The cofactor is heme.

This chain is Cytochrome P450 71B1 (CYP71B1), found in Thlaspi arvense (Field penny-cress).